Consider the following 125-residue polypeptide: Cytochrome c-556 (125 aa).

Residues M13, C113, C116, and H117 each coordinate heme. Heme c-binding residues include M13, C113, C116, and H117.

Monomer. Binds 1 heme c group covalently per subunit.

Functionally, low-spin monoheme cytochrome c. The chain is Cytochrome c-556 from Agrobacterium tumefaciens (strain apple 185).